A 286-amino-acid polypeptide reads, in one-letter code: Bifunctional protein FolD 2 (286 aa).

Residues 165-167 (GRG), threonine 192, and valine 233 contribute to the NADP(+) site.

It belongs to the tetrahydrofolate dehydrogenase/cyclohydrolase family. Homodimer.

It catalyses the reaction (6R)-5,10-methylene-5,6,7,8-tetrahydrofolate + NADP(+) = (6R)-5,10-methenyltetrahydrofolate + NADPH. The catalysed reaction is (6R)-5,10-methenyltetrahydrofolate + H2O = (6R)-10-formyltetrahydrofolate + H(+). It participates in one-carbon metabolism; tetrahydrofolate interconversion. Catalyzes the oxidation of 5,10-methylenetetrahydrofolate to 5,10-methenyltetrahydrofolate and then the hydrolysis of 5,10-methenyltetrahydrofolate to 10-formyltetrahydrofolate. The protein is Bifunctional protein FolD 2 of Rhodococcus jostii (strain RHA1).